The chain runs to 132 residues: ATP synthase epsilon chain (132 aa).

It belongs to the ATPase epsilon chain family. As to quaternary structure, F-type ATPases have 2 components, CF(1) - the catalytic core - and CF(0) - the membrane proton channel. CF(1) has five subunits: alpha(3), beta(3), gamma(1), delta(1), epsilon(1). CF(0) has three main subunits: a, b and c.

The protein localises to the cell membrane. Produces ATP from ADP in the presence of a proton gradient across the membrane. The sequence is that of ATP synthase epsilon chain from Desulfitobacterium hafniense (strain Y51).